We begin with the raw amino-acid sequence, 200 residues long: Thymidine kinase (200 aa).

ATP is bound by residues 15 to 22 (GPMYSGKS) and 88 to 91 (DEVQ). Catalysis depends on glutamate 89, which acts as the Proton acceptor. Zn(2+) is bound by residues cysteine 145, cysteine 148, cysteine 177, and cysteine 180.

This sequence belongs to the thymidine kinase family. As to quaternary structure, homotetramer.

Its subcellular location is the cytoplasm. The catalysed reaction is thymidine + ATP = dTMP + ADP + H(+). The protein is Thymidine kinase of Mycoplasma mobile (strain ATCC 43663 / 163K / NCTC 11711) (Mesomycoplasma mobile).